A 390-amino-acid chain; its full sequence is LL-diaminopimelate aminotransferase 2 (390 aa).

Positions 13 and 38 each coordinate substrate. Pyridoxal 5'-phosphate is bound by residues Tyr-67, 102–103 (SK), Tyr-127, Asn-177, Tyr-208, and 236–238 (SLS). Positions 103, 127, and 177 each coordinate substrate. Lys-239 carries the post-translational modification N6-(pyridoxal phosphate)lysine. Position 247 (Arg-247) interacts with pyridoxal 5'-phosphate. Arg-365 is a substrate binding site.

The protein belongs to the class-I pyridoxal-phosphate-dependent aminotransferase family. LL-diaminopimelate aminotransferase subfamily. In terms of assembly, homodimer. Pyridoxal 5'-phosphate serves as cofactor.

The catalysed reaction is (2S,6S)-2,6-diaminopimelate + 2-oxoglutarate = (S)-2,3,4,5-tetrahydrodipicolinate + L-glutamate + H2O + H(+). It functions in the pathway amino-acid biosynthesis; L-lysine biosynthesis via DAP pathway; LL-2,6-diaminopimelate from (S)-tetrahydrodipicolinate (aminotransferase route): step 1/1. Its function is as follows. Involved in the synthesis of meso-diaminopimelate (m-DAP or DL-DAP), required for both lysine and peptidoglycan biosynthesis. Catalyzes the direct conversion of tetrahydrodipicolinate to LL-diaminopimelate. The polypeptide is LL-diaminopimelate aminotransferase 2 (Trichormus variabilis (strain ATCC 29413 / PCC 7937) (Anabaena variabilis)).